The sequence spans 99 residues: uncharacterized protein (99 aa).

This is an uncharacterized protein from Escherichia coli (strain K12).